The chain runs to 215 residues: Kinetochore protein Spc25 (215 aa).

Residues 43–114 adopt a coiled-coil conformation; the sequence is DNLLTAMEKA…MECIHALKRA (72 aa).

The protein belongs to the SPC25 family. In terms of assembly, component of the Ndc80 complex, which is composed of Ndc80, Nuf2 and Spc25.

The protein resides in the nucleus. Its subcellular location is the chromosome. The protein localises to the centromere. It localises to the kinetochore. Acts as a component of the essential kinetochore-associated Ndc80 complex, which is required for chromosome segregation and spindle checkpoint activity during meiosis and mitosis. Required for kinetochore integrity and the organization of stable microtubule binding sites in the outer plate of the kinetochore. Participates in SAC signaling that responds specifically to disruptions in spindle microtubule dynamics. The NDC80 complex synergistically enhances the affinity of the SKA1 complex for microtubules and may allow the NDC80 complex to track depolymerizing microtubules. This Drosophila ananassae (Fruit fly) protein is Kinetochore protein Spc25.